The following is a 345-amino-acid chain: Tetraacyldisaccharide 4'-kinase (345 aa).

Residue 61 to 68 participates in ATP binding; it reads TAGGTGKT.

The protein belongs to the LpxK family.

It catalyses the reaction a lipid A disaccharide + ATP = a lipid IVA + ADP + H(+). It functions in the pathway glycolipid biosynthesis; lipid IV(A) biosynthesis; lipid IV(A) from (3R)-3-hydroxytetradecanoyl-[acyl-carrier-protein] and UDP-N-acetyl-alpha-D-glucosamine: step 6/6. Its function is as follows. Transfers the gamma-phosphate of ATP to the 4'-position of a tetraacyldisaccharide 1-phosphate intermediate (termed DS-1-P) to form tetraacyldisaccharide 1,4'-bis-phosphate (lipid IVA). The sequence is that of Tetraacyldisaccharide 4'-kinase from Xanthomonas axonopodis pv. citri (strain 306).